Here is a 589-residue protein sequence, read N- to C-terminus: Lipoprotein LpqB (589 aa).

The signal sequence occupies residues 1-20; that stretch reads MMRGVLVIMRLLCLGMLFTG. A lipid anchor (N-palmitoyl cysteine) is attached at cysteine 21. Cysteine 21 is lipidated: S-diacylglycerol cysteine.

This sequence belongs to the LpqB lipoprotein family.

It is found in the cell membrane. This is Lipoprotein LpqB from Mycobacterium leprae (strain TN).